Here is a 94-residue protein sequence, read N- to C-terminus: MLKPLGDRIIIEQIQSEEKTASGIVLPDSAKEKPQEGKVVAVGTGRVTDNGEKVALEVKEGDSIIFSKYAGTEVKYEGTEYLILRESDVLAIIG.

This sequence belongs to the GroES chaperonin family. In terms of assembly, heptamer of 7 subunits arranged in a ring. Interacts with the chaperonin GroEL.

It localises to the cytoplasm. Together with the chaperonin GroEL, plays an essential role in assisting protein folding. The GroEL-GroES system forms a nano-cage that allows encapsulation of the non-native substrate proteins and provides a physical environment optimized to promote and accelerate protein folding. GroES binds to the apical surface of the GroEL ring, thereby capping the opening of the GroEL channel. The sequence is that of Co-chaperonin GroES from Shouchella clausii (strain KSM-K16) (Alkalihalobacillus clausii).